Here is a 137-residue protein sequence, read N- to C-terminus: Small ribosomal subunit protein uS11 (137 aa).

Residues 1 to 30 (MAQAKKGGAPKKGQKTRRREKKNVPHGAAH) are disordered. Basic residues predominate over residues 8–21 (GAPKKGQKTRRREK).

The protein belongs to the universal ribosomal protein uS11 family. As to quaternary structure, part of the 30S ribosomal subunit. Interacts with proteins S7 and S18. Binds to IF-3.

Functionally, located on the platform of the 30S subunit, it bridges several disparate RNA helices of the 16S rRNA. Forms part of the Shine-Dalgarno cleft in the 70S ribosome. The polypeptide is Small ribosomal subunit protein uS11 (Mycolicibacterium vanbaalenii (strain DSM 7251 / JCM 13017 / BCRC 16820 / KCTC 9966 / NRRL B-24157 / PYR-1) (Mycobacterium vanbaalenii)).